Here is a 180-residue protein sequence, read N- to C-terminus: Ribulose bisphosphate carboxylase small subunit, chloroplastic (180 aa).

The N-terminal 56 residues, 1-56 (MASSVLSSAAVATRSNVAQANMVAPFTGLKSAASFPVSRKQNLDITSIASNGGRVQ), are a transit peptide targeting the chloroplast.

It belongs to the RuBisCO small chain family. As to quaternary structure, heterohexadecamer of 8 large and 8 small subunits. (Microbial infection) Binds to tobamovirus movement protein at the plasmodesmata (e.g. tomato mosaic virus MP AC P69513); this interaction seems required for viral systemic movement.

The protein resides in the plastid. The protein localises to the chloroplast. It is found in the cell junction. Its subcellular location is the plasmodesma. Functionally, ruBisCO catalyzes two reactions: the carboxylation of D-ribulose 1,5-bisphosphate, the primary event in carbon dioxide fixation, as well as the oxidative fragmentation of the pentose substrate. Both reactions occur simultaneously and in competition at the same active site. Although the small subunit is not catalytic it is essential for maximal activity. Involved in antiviral defenses. Its function is as follows. (Microbial infection) Required for tobamovirus movement (e.g. tobacco mosaic virus (TMV)). The polypeptide is Ribulose bisphosphate carboxylase small subunit, chloroplastic (Nicotiana benthamiana).